A 231-amino-acid chain; its full sequence is Albumin-2 (231 aa).

Hemopexin repeat units follow at residues 4-55 (TGYI…FKSL), 62-112 (SYGV…FPFF), 118-166 (ENGI…FPCF), and 172-223 (ESGT…WPSL). Ca(2+)-binding residues include Asn8, Asp66, Asp122, and Asp176.

As to quaternary structure, monomer and homodimer.

It is found in the cytoplasm. It localises to the cytosol. Its function is as follows. May play a role in response to oxidative stress and polyamine biosynthesis. The chain is Albumin-2 from Pisum sativum (Garden pea).